The primary structure comprises 279 residues: Tryptophan synthase alpha chain (279 aa).

Residues E50 and D61 each act as proton acceptor in the active site.

Belongs to the TrpA family. Tetramer of two alpha and two beta chains.

It carries out the reaction (1S,2R)-1-C-(indol-3-yl)glycerol 3-phosphate + L-serine = D-glyceraldehyde 3-phosphate + L-tryptophan + H2O. Its pathway is amino-acid biosynthesis; L-tryptophan biosynthesis; L-tryptophan from chorismate: step 5/5. The alpha subunit is responsible for the aldol cleavage of indoleglycerol phosphate to indole and glyceraldehyde 3-phosphate. The chain is Tryptophan synthase alpha chain from Rhizobium rhizogenes (strain K84 / ATCC BAA-868) (Agrobacterium radiobacter).